A 104-amino-acid polypeptide reads, in one-letter code: Nucleoid-associated protein jk2011 (104 aa).

Belongs to the YbaB/EbfC family. In terms of assembly, homodimer.

It localises to the cytoplasm. The protein resides in the nucleoid. In terms of biological role, binds to DNA and alters its conformation. May be involved in regulation of gene expression, nucleoid organization and DNA protection. The protein is Nucleoid-associated protein jk2011 of Corynebacterium jeikeium (strain K411).